We begin with the raw amino-acid sequence, 401 residues long: Phosphoglycerate kinase (401 aa).

Residues 26–28, R41, 64–67, R125, and R158 each bind substrate; these read DFN and HLGK. Residues K209, G300, E331, and 357 to 360 each bind ATP; that span reads GGDS.

It belongs to the phosphoglycerate kinase family. As to quaternary structure, monomer.

The protein resides in the cytoplasm. It carries out the reaction (2R)-3-phosphoglycerate + ATP = (2R)-3-phospho-glyceroyl phosphate + ADP. Its pathway is carbohydrate degradation; glycolysis; pyruvate from D-glyceraldehyde 3-phosphate: step 2/5. This is Phosphoglycerate kinase from Clostridium tetani (strain Massachusetts / E88).